The sequence spans 696 residues: Elongation factor G (696 aa).

Residues Glu-8–Thr-286 enclose the tr-type G domain. GTP is bound by residues Ala-17–Thr-24, Asp-81–His-85, and Asn-135–Asp-138.

It belongs to the TRAFAC class translation factor GTPase superfamily. Classic translation factor GTPase family. EF-G/EF-2 subfamily.

It localises to the cytoplasm. Its function is as follows. Catalyzes the GTP-dependent ribosomal translocation step during translation elongation. During this step, the ribosome changes from the pre-translocational (PRE) to the post-translocational (POST) state as the newly formed A-site-bound peptidyl-tRNA and P-site-bound deacylated tRNA move to the P and E sites, respectively. Catalyzes the coordinated movement of the two tRNA molecules, the mRNA and conformational changes in the ribosome. This is Elongation factor G from Sulfurimonas denitrificans (strain ATCC 33889 / DSM 1251) (Thiomicrospira denitrificans (strain ATCC 33889 / DSM 1251)).